The following is a 118-amino-acid chain: MARIAGINIPDQKHAVIALTSIYGVGKTRSKAILAAAGIAENVKISELSEEQIDTLRDEVAKFVVEGDLRREISMSIKRLMDLGCYRGLRHRRGLPVRGQRTKTNARTRKGPCKPIKK.

A disordered region spans residues 94–118 (GLPVRGQRTKTNARTRKGPCKPIKK).

Belongs to the universal ribosomal protein uS13 family. As to quaternary structure, part of the 30S ribosomal subunit. Forms a loose heterodimer with protein S19. Forms two bridges to the 50S subunit in the 70S ribosome.

Functionally, located at the top of the head of the 30S subunit, it contacts several helices of the 16S rRNA. In the 70S ribosome it contacts the 23S rRNA (bridge B1a) and protein L5 of the 50S subunit (bridge B1b), connecting the 2 subunits; these bridges are implicated in subunit movement. Contacts the tRNAs in the A and P-sites. This Salmonella typhi protein is Small ribosomal subunit protein uS13.